The primary structure comprises 145 residues: uncharacterized protein (145 aa).

This sequence belongs to the methyltransferase superfamily.

Its function is as follows. Probable methyltransferase. This is an uncharacterized protein from Schizosaccharomyces pombe (strain 972 / ATCC 24843) (Fission yeast).